Reading from the N-terminus, the 432-residue chain is uncharacterized protein (432 aa).

Residues 1–14 (MSDTTDVPENQKSP) show a composition bias toward polar residues. A disordered region spans residues 1-42 (MSDTTDVPENQKSPKPSGKADKRKIEEKPENSSLKRKKFEDP). Over residues 18-30 (GKADKRKIEEKPE) the composition is skewed to basic and acidic residues. Positions 85-148 (RKMVEVFSGE…HEHPIRDLPI (64 aa)) constitute an S4 RNA-binding domain. Asp199 is an active-site residue.

This sequence belongs to the pseudouridine synthase RluA family.

This is an uncharacterized protein from Caenorhabditis elegans.